Consider the following 663-residue polypeptide: Bifunctional polymyxin resistance protein ArnA (663 aa).

The segment at 1-304 is formyltransferase ArnAFT; it reads MKAVVFAYHD…ELGLVAGMRL (304 aa). Catalysis depends on His104, which acts as the Proton donor; for formyltransferase activity. (6R)-10-formyltetrahydrofolate is bound by residues Arg114 and 136 to 140; that span reads TMRPD. The segment at 316 to 663 is dehydrogenase ArnADH; sequence RLTRVLILGV…GAVSTGVEHD (348 aa). Residues Asp349 and 370-371 each bind NAD(+); that span reads DI. UDP-alpha-D-glucuronate is bound by residues Ala395, Tyr400, and 434-435; that span reads TS. The active-site Proton acceptor; for decarboxylase activity is Glu436. UDP-alpha-D-glucuronate-binding positions include Arg462, Asn494, 528 to 537, and Tyr615; that span reads QLVDGGAQKR. The active-site Proton donor; for decarboxylase activity is Arg621.

This sequence in the N-terminal section; belongs to the Fmt family. UDP-L-Ara4N formyltransferase subfamily. It in the C-terminal section; belongs to the NAD(P)-dependent epimerase/dehydratase family. UDP-glucuronic acid decarboxylase subfamily. As to quaternary structure, homohexamer, formed by a dimer of trimers.

The enzyme catalyses UDP-alpha-D-glucuronate + NAD(+) = UDP-beta-L-threo-pentopyranos-4-ulose + CO2 + NADH. The catalysed reaction is UDP-4-amino-4-deoxy-beta-L-arabinose + (6R)-10-formyltetrahydrofolate = UDP-4-deoxy-4-formamido-beta-L-arabinose + (6S)-5,6,7,8-tetrahydrofolate + H(+). It participates in nucleotide-sugar biosynthesis; UDP-4-deoxy-4-formamido-beta-L-arabinose biosynthesis; UDP-4-deoxy-4-formamido-beta-L-arabinose from UDP-alpha-D-glucuronate: step 1/3. The protein operates within nucleotide-sugar biosynthesis; UDP-4-deoxy-4-formamido-beta-L-arabinose biosynthesis; UDP-4-deoxy-4-formamido-beta-L-arabinose from UDP-alpha-D-glucuronate: step 3/3. Its pathway is bacterial outer membrane biogenesis; lipopolysaccharide biosynthesis. In terms of biological role, bifunctional enzyme that catalyzes the oxidative decarboxylation of UDP-glucuronic acid (UDP-GlcUA) to UDP-4-keto-arabinose (UDP-Ara4O) and the addition of a formyl group to UDP-4-amino-4-deoxy-L-arabinose (UDP-L-Ara4N) to form UDP-L-4-formamido-arabinose (UDP-L-Ara4FN). The modified arabinose is attached to lipid A and is required for resistance to polymyxin and cationic antimicrobial peptides. The sequence is that of Bifunctional polymyxin resistance protein ArnA from Aeromonas salmonicida (strain A449).